A 108-amino-acid polypeptide reads, in one-letter code: Cytochrome c-555 (108 aa).

The signal sequence occupies residues 1–22; sequence MSRFVSAALVGAALLVSGNAFA. Residues C36, C39, H40, and M82 each coordinate heme c.

Post-translationally, binds 1 heme c group covalently per subunit.

Functionally, this basic c-type monoheme cytochrome has been found exclusively in the green photosynthetic bacteria, although its role in bacterial photosynthesis is not established. It has an unusually low redox potential compared with mitochondrial cytochrome c. It is reactive with cytochrome c oxidases but not with reductases. The polypeptide is Cytochrome c-555 (Chlorobaculum tepidum (strain ATCC 49652 / DSM 12025 / NBRC 103806 / TLS) (Chlorobium tepidum)).